The primary structure comprises 645 residues: ATP-dependent zinc metalloprotease FtsH 1 (645 aa).

Residues 1–6 (MRSTQK) are Cytoplasmic-facing. A helical transmembrane segment spans residues 7-27 (TLALWFFLIIMAVFLFQAYES). Over 28–110 (KQQKAIADFN…NYERADNGGF (83 aa)) the chain is Periplasmic. Residues 111–131 (FQSLLVNWLPLILIVAMFLFI) form a helical membrane-spanning segment. The Cytoplasmic segment spans residues 132 to 645 (MRQIQAGGGK…PVGNTGPVTI (514 aa)). 203–210 (GSPGTGKT) is a binding site for ATP. His-425 is a binding site for Zn(2+). Glu-426 is a catalytic residue. Residues His-429 and Asp-501 each coordinate Zn(2+).

This sequence in the central section; belongs to the AAA ATPase family. It in the C-terminal section; belongs to the peptidase M41 family. As to quaternary structure, homohexamer. Requires Zn(2+) as cofactor.

It is found in the cell inner membrane. Its function is as follows. Acts as a processive, ATP-dependent zinc metallopeptidase for both cytoplasmic and membrane proteins. Plays a role in the quality control of integral membrane proteins. This is ATP-dependent zinc metalloprotease FtsH 1 from Bdellovibrio bacteriovorus (strain ATCC 15356 / DSM 50701 / NCIMB 9529 / HD100).